The chain runs to 119 residues: Large ribosomal subunit protein P3z (119 aa).

Gly residues predominate over residues 79–90; the sequence is AGGAASSGGGAG. Residues 79-119 form a disordered region; the sequence is AGGAASSGGGAGEAAAAPKEDEKKKEESEEEEGDFGFDLFG. Residues 96–105 show a composition bias toward basic and acidic residues; sequence PKEDEKKKEE.

Belongs to the eukaryotic ribosomal protein P1/P2 family. Phosphorylated.

Its function is as follows. Plays an important role in the elongation step of protein synthesis. In Arabidopsis thaliana (Mouse-ear cress), this protein is Large ribosomal subunit protein P3z (RPP3A).